The sequence spans 227 residues: 2,3-bisphosphoglycerate-dependent phosphoglycerate mutase (227 aa).

Substrate is bound by residues 8–15, 21–22, Arg58, 110–113, Lys121, 137–138, and 181–182; these read RHGKSVWN, TG, ERMY, RR, and GN. The Tele-phosphohistidine intermediate role is filled by His9. The active-site Proton donor/acceptor is the Glu110.

This sequence belongs to the phosphoglycerate mutase family. BPG-dependent PGAM subfamily.

The catalysed reaction is (2R)-2-phosphoglycerate = (2R)-3-phosphoglycerate. It functions in the pathway carbohydrate degradation; glycolysis; pyruvate from D-glyceraldehyde 3-phosphate: step 3/5. Functionally, catalyzes the interconversion of 2-phosphoglycerate and 3-phosphoglycerate. The sequence is that of 2,3-bisphosphoglycerate-dependent phosphoglycerate mutase from Chlamydia caviae (strain ATCC VR-813 / DSM 19441 / 03DC25 / GPIC) (Chlamydophila caviae).